An 88-amino-acid chain; its full sequence is Small ribosomal subunit protein bS16c (88 aa).

The protein belongs to the bacterial ribosomal protein bS16 family.

The protein resides in the plastid. The protein localises to the chloroplast. This is Small ribosomal subunit protein bS16c from Gossypium hirsutum (Upland cotton).